The following is a 523-amino-acid chain: Ribosomal protein uS12 methylthiotransferase RimO (523 aa).

In terms of domain architecture, MTTase N-terminal spans 7 to 134 (RRVALITLGC…IATHLAAVLA (128 aa)). Residues C16, C52, C97, C192, C196, and C199 each coordinate [4Fe-4S] cluster. In terms of domain architecture, Radical SAM core spans 178–409 (LTAGPVAVLK…DLVEQLTAAR (232 aa)). The TRAM domain occupies 411-492 (DARIGSRVQV…GVDLIAEFIA (82 aa)).

This sequence belongs to the methylthiotransferase family. RimO subfamily. Requires [4Fe-4S] cluster as cofactor.

It localises to the cytoplasm. It catalyses the reaction L-aspartate(89)-[ribosomal protein uS12]-hydrogen + (sulfur carrier)-SH + AH2 + 2 S-adenosyl-L-methionine = 3-methylsulfanyl-L-aspartate(89)-[ribosomal protein uS12]-hydrogen + (sulfur carrier)-H + 5'-deoxyadenosine + L-methionine + A + S-adenosyl-L-homocysteine + 2 H(+). Catalyzes the methylthiolation of an aspartic acid residue of ribosomal protein uS12. This chain is Ribosomal protein uS12 methylthiotransferase RimO, found in Frankia casuarinae (strain DSM 45818 / CECT 9043 / HFP020203 / CcI3).